The sequence spans 120 residues: Fumarate reductase subunit D (120 aa).

The next 3 membrane-spanning stretches (helical) occupy residues 25–45 (FAML…LGVI), 55–75 (VAGF…ISMP), and 100–120 (IACY…IFMI).

It belongs to the FrdD family. As to quaternary structure, part of an enzyme complex containing four subunits: a flavoprotein (FrdA), an iron-sulfur protein (FrdB), and two hydrophobic anchor proteins (FrdC and FrdD).

The protein resides in the cell inner membrane. Anchors the catalytic components of the fumarate reductase complex to the cell membrane, binds quinones. The chain is Fumarate reductase subunit D from Aliivibrio fischeri (strain MJ11) (Vibrio fischeri).